The chain runs to 351 residues: Thiamine-phosphate synthase (351 aa).

The segment at M1–R127 is unknown. Positions R64–D84 are disordered. The thiamine-phosphate synthase stretch occupies residues V128–S351. 4-amino-2-methyl-5-(diphosphooxymethyl)pyrimidine is bound by residues Q178–K182 and N210. Residues D211 and D230 each contribute to the Mg(2+) site. A 4-amino-2-methyl-5-(diphosphooxymethyl)pyrimidine-binding site is contributed by S249. T275–T277 is a 2-[(2R,5Z)-2-carboxy-4-methylthiazol-5(2H)-ylidene]ethyl phosphate binding site. K278 serves as a coordination point for 4-amino-2-methyl-5-(diphosphooxymethyl)pyrimidine. A 2-[(2R,5Z)-2-carboxy-4-methylthiazol-5(2H)-ylidene]ethyl phosphate-binding site is contributed by G305.

Belongs to the thiamine-phosphate synthase family. The cofactor is Mg(2+).

It catalyses the reaction 2-[(2R,5Z)-2-carboxy-4-methylthiazol-5(2H)-ylidene]ethyl phosphate + 4-amino-2-methyl-5-(diphosphooxymethyl)pyrimidine + 2 H(+) = thiamine phosphate + CO2 + diphosphate. It carries out the reaction 2-(2-carboxy-4-methylthiazol-5-yl)ethyl phosphate + 4-amino-2-methyl-5-(diphosphooxymethyl)pyrimidine + 2 H(+) = thiamine phosphate + CO2 + diphosphate. The catalysed reaction is 4-methyl-5-(2-phosphooxyethyl)-thiazole + 4-amino-2-methyl-5-(diphosphooxymethyl)pyrimidine + H(+) = thiamine phosphate + diphosphate. The protein operates within cofactor biosynthesis; thiamine diphosphate biosynthesis; thiamine phosphate from 4-amino-2-methyl-5-diphosphomethylpyrimidine and 4-methyl-5-(2-phosphoethyl)-thiazole: step 1/1. In terms of biological role, condenses 4-methyl-5-(beta-hydroxyethyl)thiazole monophosphate (THZ-P) and 2-methyl-4-amino-5-hydroxymethyl pyrimidine pyrophosphate (HMP-PP) to form thiamine monophosphate (TMP). This chain is Thiamine-phosphate synthase, found in Thermosynechococcus vestitus (strain NIES-2133 / IAM M-273 / BP-1).